The sequence spans 187 residues: Probable chorismate pyruvate-lyase (187 aa).

Residues Arg-76, Leu-114, and Glu-173 each coordinate substrate.

It belongs to the UbiC family.

It localises to the cytoplasm. It carries out the reaction chorismate = 4-hydroxybenzoate + pyruvate. Its pathway is cofactor biosynthesis; ubiquinone biosynthesis. In terms of biological role, removes the pyruvyl group from chorismate, with concomitant aromatization of the ring, to provide 4-hydroxybenzoate (4HB) for the ubiquinone pathway. The polypeptide is Probable chorismate pyruvate-lyase (Shewanella amazonensis (strain ATCC BAA-1098 / SB2B)).